The chain runs to 416 residues: Histidinol dehydrogenase (416 aa).

The NAD(+) site is built by Tyr-117, Gln-178, and Asn-201. Substrate contacts are provided by Thr-224, Gln-246, and His-249. Gln-246 and His-249 together coordinate Zn(2+). Residues Glu-314 and His-315 each act as proton acceptor in the active site. His-315, Asp-348, Glu-402, and His-407 together coordinate substrate. Position 348 (Asp-348) interacts with Zn(2+). His-407 provides a ligand contact to Zn(2+).

This sequence belongs to the histidinol dehydrogenase family. Requires Zn(2+) as cofactor.

It catalyses the reaction L-histidinol + 2 NAD(+) + H2O = L-histidine + 2 NADH + 3 H(+). The protein operates within amino-acid biosynthesis; L-histidine biosynthesis; L-histidine from 5-phospho-alpha-D-ribose 1-diphosphate: step 9/9. Its function is as follows. Catalyzes the sequential NAD-dependent oxidations of L-histidinol to L-histidinaldehyde and then to L-histidine. The protein is Histidinol dehydrogenase of Staphylococcus aureus (strain bovine RF122 / ET3-1).